The chain runs to 329 residues: GTPase Obg (329 aa).

The region spanning 1-159 (MQFIDEAKIF…MWVWLHLKLL (159 aa)) is the Obg domain. The region spanning 160-327 (SDVGLVGLPN…LLANILSELQ (168 aa)) is the OBG-type G domain. Residues 166 to 173 (GLPNAGKS), 191 to 195 (FTTLT), 212 to 215 (DIPG), 279 to 282 (TKTD), and 308 to 310 (SSY) contribute to the GTP site. Positions 173 and 193 each coordinate Mg(2+).

Belongs to the TRAFAC class OBG-HflX-like GTPase superfamily. OBG GTPase family. As to quaternary structure, monomer. It depends on Mg(2+) as a cofactor.

It localises to the cytoplasm. In terms of biological role, an essential GTPase which binds GTP, GDP and possibly (p)ppGpp with moderate affinity, with high nucleotide exchange rates and a fairly low GTP hydrolysis rate. Plays a role in control of the cell cycle, stress response, ribosome biogenesis and in those bacteria that undergo differentiation, in morphogenesis control. The polypeptide is GTPase Obg (Orientia tsutsugamushi (strain Ikeda) (Rickettsia tsutsugamushi)).